A 442-amino-acid chain; its full sequence is Transcription factor MYCFIDRAFT_198930 (442 aa).

The interval 1–34 is disordered; that stretch reads MSTTPMAAPPGADLKPVTSSRGRSSTSDEQKLRS. The segment at residues 36–63 is a DNA-binding region (zn(2)-C6 fungal-type); that stretch reads CESCAQSKLKCSGDKPACARCAKRGLAC. Residues 74-107 form a disordered region; that stretch reads KPKGYTSTNDNNPSKRREDSHSPAASQWSSTGHL. The segment covering 96 to 107 has biased composition (polar residues); it reads PAASQWSSTGHL.

Its subcellular location is the nucleus. In terms of biological role, transcription factor that positively regulates the expression of the gene cluster that mediates the biosynthesis of an emodin derivative that may be involved in black Sigatoka disease of banana. In Pseudocercospora fijiensis (strain CIRAD86) (Black leaf streak disease fungus), this protein is Transcription factor MYCFIDRAFT_198930.